We begin with the raw amino-acid sequence, 247 residues long: MAGGVLPLRGLRALCRVLLFLSQFCILSGGEQSQALAQSIKDPGPTRTFTVVPRAAESTEIPPYVMKCPSNGLCSRLPADCIDCTTNFSCTYGKPVTFDCAVKPSVTCVDQDFKSQKNFIINMTCRFCWQLPETDYECTNSTSCMTVSCPRQRYPANCTVRDHVHCLGNRTFPKMLYCNWTGGYKWSTALALSITLGGFGADRFYLGQWREGLGKLFSFGGLGIWTLIDVLLIGVGYVGPADGSLYI.

The signal sequence occupies residues 1 to 29; that stretch reads MAGGVLPLRGLRALCRVLLFLSQFCILSG. At 30-179 the chain is on the extracellular side; the sequence is GEQSQALAQS…RTFPKMLYCN (150 aa). N-linked (GlcNAc...) asparagine glycans are attached at residues Asn-87, Asn-122, Asn-140, Asn-157, Asn-169, and Asn-179. A helical transmembrane segment spans residues 180 to 200; sequence WTGGYKWSTALALSITLGGFG. The TM2 domain maps to 183 to 230; the sequence is GYKWSTALALSITLGGFGADRFYLGQWREGLGKLFSFGGLGIWTLIDV. At 201–215 the chain is on the cytoplasmic side; that stretch reads ADRFYLGQWREGLGK. A helical transmembrane segment spans residues 216 to 236; that stretch reads LFSFGGLGIWTLIDVLLIGVG. The Extracellular segment spans residues 237 to 247; that stretch reads YVGPADGSLYI.

It belongs to the TM2 family. In terms of tissue distribution, widely expressed.

It is found in the membrane. In terms of biological role, probable positive regulator of Notch signaling. The protein is TM2 domain-containing protein 3 (TM2D3) of Homo sapiens (Human).